Reading from the N-terminus, the 307-residue chain is Aspartate carbamoyltransferase catalytic subunit (307 aa).

2 residues coordinate carbamoyl phosphate: arginine 54 and threonine 55. L-aspartate is bound at residue lysine 83. Residues arginine 104, histidine 132, and glutamine 135 each coordinate carbamoyl phosphate. Arginine 165 and arginine 228 together coordinate L-aspartate. Residues leucine 267 and proline 268 each contribute to the carbamoyl phosphate site.

Belongs to the aspartate/ornithine carbamoyltransferase superfamily. ATCase family. In terms of assembly, heterododecamer (2C3:3R2) of six catalytic PyrB chains organized as two trimers (C3), and six regulatory PyrI chains organized as three dimers (R2).

It carries out the reaction carbamoyl phosphate + L-aspartate = N-carbamoyl-L-aspartate + phosphate + H(+). It participates in pyrimidine metabolism; UMP biosynthesis via de novo pathway; (S)-dihydroorotate from bicarbonate: step 2/3. Its function is as follows. Catalyzes the condensation of carbamoyl phosphate and aspartate to form carbamoyl aspartate and inorganic phosphate, the committed step in the de novo pyrimidine nucleotide biosynthesis pathway. In Clostridium botulinum (strain ATCC 19397 / Type A), this protein is Aspartate carbamoyltransferase catalytic subunit.